We begin with the raw amino-acid sequence, 177 residues long: Large ribosomal subunit protein uL6 (177 aa).

Lys44 carries the post-translational modification N6-acetyllysine.

The protein belongs to the universal ribosomal protein uL6 family. As to quaternary structure, part of the 50S ribosomal subunit.

Functionally, this protein binds to the 23S rRNA, and is important in its secondary structure. It is located near the subunit interface in the base of the L7/L12 stalk, and near the tRNA binding site of the peptidyltransferase center. In Escherichia fergusonii (strain ATCC 35469 / DSM 13698 / CCUG 18766 / IAM 14443 / JCM 21226 / LMG 7866 / NBRC 102419 / NCTC 12128 / CDC 0568-73), this protein is Large ribosomal subunit protein uL6.